Here is a 192-residue protein sequence, read N- to C-terminus: Erythropoietin (192 aa).

The first 26 residues, 1-26, serve as a signal peptide directing secretion; it reads MGVPDCLALPLLVTFLLLSLGLPVLG. Cysteines 33 and 187 form a disulfide. N-linked (GlcNAc...) asparagine glycosylation is found at asparagine 50, asparagine 64, and asparagine 109.

This sequence belongs to the EPO/TPO family.

It is found in the secreted. Hormone involved in the regulation of erythrocyte proliferation and differentiation and the maintenance of a physiological level of circulating erythrocyte mass. Binds to EPOR leading to EPOR dimerization and JAK2 activation thereby activating specific downstream effectors, including STAT1 and STAT3. The polypeptide is Erythropoietin (EPO) (Spalax golani (Golan Heights blind mole rat)).